The primary structure comprises 934 residues: Bifunctional uridylyltransferase/uridylyl-removing enzyme (934 aa).

Positions 1–379 (MSAHDLKLEE…TFSRRKRKLS (379 aa)) are uridylyltransferase. A uridylyl-removing region spans residues 380 to 736 (DDGAFISENH…AKPHAFEAVT (357 aa)). The 118-residue stretch at 496–613 (VDEHLLRCIA…IDFADTVQTM (118 aa)) folds into the HD domain. 2 ACT domains span residues 737–818 (EITV…DMLA) and 848–931 (VIEV…RSPQ).

The protein belongs to the GlnD family. The cofactor is Mg(2+).

The enzyme catalyses [protein-PII]-L-tyrosine + UTP = [protein-PII]-uridylyl-L-tyrosine + diphosphate. The catalysed reaction is [protein-PII]-uridylyl-L-tyrosine + H2O = [protein-PII]-L-tyrosine + UMP + H(+). Uridylyltransferase (UTase) activity is inhibited by glutamine, while glutamine activates uridylyl-removing (UR) activity. Modifies, by uridylylation and deuridylylation, the PII regulatory proteins (GlnB and homologs), in response to the nitrogen status of the cell that GlnD senses through the glutamine level. Under low glutamine levels, catalyzes the conversion of the PII proteins and UTP to PII-UMP and PPi, while under higher glutamine levels, GlnD hydrolyzes PII-UMP to PII and UMP (deuridylylation). Thus, controls uridylylation state and activity of the PII proteins, and plays an important role in the regulation of nitrogen assimilation and metabolism. The polypeptide is Bifunctional uridylyltransferase/uridylyl-removing enzyme (Brucella melitensis biotype 2 (strain ATCC 23457)).